Here is a 411-residue protein sequence, read N- to C-terminus: Imidazolonepropionase (411 aa).

Histidine 75 and histidine 77 together coordinate Fe(3+). Histidine 75 and histidine 77 together coordinate Zn(2+). Residues arginine 84, tyrosine 147, and histidine 180 each contribute to the 4-imidazolone-5-propanoate site. An N-formimidoyl-L-glutamate-binding site is contributed by tyrosine 147. Residue histidine 245 participates in Fe(3+) binding. Position 245 (histidine 245) interacts with Zn(2+). Residue glutamine 248 participates in 4-imidazolone-5-propanoate binding. Fe(3+) is bound at residue aspartate 320. Aspartate 320 contributes to the Zn(2+) binding site. Residues asparagine 322 and glycine 324 each coordinate N-formimidoyl-L-glutamate. 4-imidazolone-5-propanoate is bound at residue threonine 325.

Belongs to the metallo-dependent hydrolases superfamily. HutI family. The cofactor is Zn(2+). It depends on Fe(3+) as a cofactor.

It localises to the cytoplasm. It carries out the reaction 4-imidazolone-5-propanoate + H2O = N-formimidoyl-L-glutamate. The protein operates within amino-acid degradation; L-histidine degradation into L-glutamate; N-formimidoyl-L-glutamate from L-histidine: step 3/3. Its function is as follows. Catalyzes the hydrolytic cleavage of the carbon-nitrogen bond in imidazolone-5-propanoate to yield N-formimidoyl-L-glutamate. It is the third step in the universal histidine degradation pathway. The sequence is that of Imidazolonepropionase from Aeromonas hydrophila subsp. hydrophila (strain ATCC 7966 / DSM 30187 / BCRC 13018 / CCUG 14551 / JCM 1027 / KCTC 2358 / NCIMB 9240 / NCTC 8049).